Consider the following 450-residue polypeptide: FAD-dependent monooxygenase okaB (450 aa).

The chain crosses the membrane as a helical span at residues 14–34 (IVIIIVGLGIAGLSAAIECHG). The FAD site is built by Glu-43 and Arg-116. Arg-194 is an active-site residue. FAD-binding residues include Asp-318 and Gly-331.

Belongs to the paxM FAD-dependent monooxygenase family.

The protein resides in the membrane. The enzyme catalyses cyclo(N(8)-(alpha,alpha-dimethylallyl)-L-Trp-6a-(alpha,alpha-dimethylallyl)-L-Trp) + AH2 + O2 = okaramine C + A + H2O. Its pathway is alkaloid biosynthesis. In terms of biological role, FAD-dependent monooxygenase; part of the gene cluster that mediates the biosynthesis of okaramine B, a prenylated indole alkaloid that possesses an unusual octacyclic ring system, including a four-membered azetidine ring and an eight-membered azocine ring, and that exhibits insecticidal activity against silkworm larvae. Within the pathway, okaC performs indole 2,3-epoxidation, facilitating the formation of the hexahydropyrrolo[2,3-b]indole (HPI) moiety of okaramine C. okaC then performs asymmetric reverse prenylation of cyclo(L-Trp-L-Trp) at N-1 and C-2' of the indole ring to produce the cyclic prenylated tryptophan dimer cyclo(N8-(alpha,alpha-dimethylallyl)-L-Trp-6a-(alpha,alpha-dime-thylallyl)-L-Trp). The biosynthesis begins with the NRPS okaA that condenses two tryptophan molecules into cyclo(L-Trp-L-Trp). Prenylation by the prenyltransferase okaC then leads to the formation of cyclo(N8-(alpha,alpha-dimethylallyl)-L-Trp-6a-(alpha,alpha-dime-thylallyl)-L-Trp). This is followed by indole 2,3-epoxidation by the FAD-dependent monooxygenase okaB to facilitate the formation of the hexahydropyrrolo[2,3-b]indole (HPI) moiety of okaramine C. The cytochrome P450 monooxygenase okaD then likely catalyzes formation of the eight-membered ring of okaramine A. The dioxygenase okaE further forms the unusual 2-dimethyl-3-methyl-azetidine ring to yield 12-deshydroxyl okaramine E, as well as the hydroxylation of 12-deshydroxyl okaramine E to produce okaramine E. The cytochrome P450 monoxygenase okaG converts 12-deshydroxyl okaramine E into 3-desmethyl okaramine B which is further methylated by the methyltransferase okaF into okaramine B. In a shunt pathway, okaG and okaF together are also able to convert okaramine E into okaramine D. Okaramine H is produced by nonenzymatic conversion from okaramine A. This is FAD-dependent monooxygenase okaB from Penicillium ochrochloron.